Here is a 495-residue protein sequence, read N- to C-terminus: UDP-N-acetylmuramoyl-L-alanyl-D-glutamate--2,6-diaminopimelate ligase (495 aa).

UDP-N-acetyl-alpha-D-muramoyl-L-alanyl-D-glutamate contacts are provided by residues leucine 27, serine 29, and 44-46; that span reads HKA. 116–122 contacts ATP; it reads GTNGKTT. UDP-N-acetyl-alpha-D-muramoyl-L-alanyl-D-glutamate-binding positions include asparagine 157, 158-159, serine 185, glutamine 191, and arginine 193; that span reads TT. An N6-carboxylysine modification is found at lysine 225. Residues arginine 390, 414–417, glycine 465, and glutamate 469 each bind meso-2,6-diaminopimelate; that span reads DNPR. The Meso-diaminopimelate recognition motif signature appears at 414–417; it reads DNPR.

The protein belongs to the MurCDEF family. MurE subfamily. Mg(2+) serves as cofactor. Post-translationally, carboxylation is probably crucial for Mg(2+) binding and, consequently, for the gamma-phosphate positioning of ATP.

Its subcellular location is the cytoplasm. The enzyme catalyses UDP-N-acetyl-alpha-D-muramoyl-L-alanyl-D-glutamate + meso-2,6-diaminopimelate + ATP = UDP-N-acetyl-alpha-D-muramoyl-L-alanyl-gamma-D-glutamyl-meso-2,6-diaminopimelate + ADP + phosphate + H(+). The protein operates within cell wall biogenesis; peptidoglycan biosynthesis. Its function is as follows. Catalyzes the addition of meso-diaminopimelic acid to the nucleotide precursor UDP-N-acetylmuramoyl-L-alanyl-D-glutamate (UMAG) in the biosynthesis of bacterial cell-wall peptidoglycan. In Pectobacterium atrosepticum (strain SCRI 1043 / ATCC BAA-672) (Erwinia carotovora subsp. atroseptica), this protein is UDP-N-acetylmuramoyl-L-alanyl-D-glutamate--2,6-diaminopimelate ligase.